Here is a 149-residue protein sequence, read N- to C-terminus: SsrA-binding protein (149 aa).

This sequence belongs to the SmpB family.

It localises to the cytoplasm. Functionally, required for rescue of stalled ribosomes mediated by trans-translation. Binds to transfer-messenger RNA (tmRNA), required for stable association of tmRNA with ribosomes. tmRNA and SmpB together mimic tRNA shape, replacing the anticodon stem-loop with SmpB. tmRNA is encoded by the ssrA gene; the 2 termini fold to resemble tRNA(Ala) and it encodes a 'tag peptide', a short internal open reading frame. During trans-translation Ala-aminoacylated tmRNA acts like a tRNA, entering the A-site of stalled ribosomes, displacing the stalled mRNA. The ribosome then switches to translate the ORF on the tmRNA; the nascent peptide is terminated with the 'tag peptide' encoded by the tmRNA and targeted for degradation. The ribosome is freed to recommence translation, which seems to be the essential function of trans-translation. The sequence is that of SsrA-binding protein from Anaplasma marginale (strain St. Maries).